A 310-amino-acid chain; its full sequence is Olfactory receptor 4C16 (310 aa).

Topologically, residues 1 to 23 (MQLNNNVTEFILLGLTQDPFWKK) are extracellular. Asparagine 6 carries an N-linked (GlcNAc...) asparagine glycan. Residues 24 to 47 (IVFVIFLRLYLGTLLGNLLIIISV) traverse the membrane as a helical segment. The Cytoplasmic portion of the chain corresponds to 48 to 55 (KTSQALKN). The chain crosses the membrane as a helical span at residues 56-77 (PMFFFLFYLSLSDTCLSTSITP). Residues 78–98 (RMIVDALLKKTTISFSECMIQ) lie on the Extracellular side of the membrane. The cysteines at positions 95 and 187 are disulfide-linked. The helical transmembrane segment at 99–118 (VFSSHVFGCLEIFILILTAV) threads the bilayer. Over 119–137 (DRYVDICKPLHYMTIISQW) the chain is Cytoplasmic. Residues 138 to 156 (VCGVLMAVAWVGSCVHSLV) form a helical membrane-spanning segment. Residues 157–193 (QIFLALSLPFCGPNVINHCFCDLQPLLKQACSETYVV) lie on the Extracellular side of the membrane. The helical transmembrane segment at 194 to 217 (NLLLVSNSGAICAVSYVMLIFSYV) threads the bilayer. Over 218 to 233 (IFLHSLRNHSAEVIKK) the chain is Cytoplasmic. Residues 234 to 256 (ALSTCVSHIIVVILFFGPCIFMY) traverse the membrane as a helical segment. Residues 257–267 (TCLATVFPMDK) lie on the Extracellular side of the membrane. The helical transmembrane segment at 268–287 (MIAVFYTVGTSFLNPVIYTL) threads the bilayer. At 288-310 (KNTEVKSAMRKLWSKKLITDDKR) the chain is on the cytoplasmic side.

It belongs to the G-protein coupled receptor 1 family.

It is found in the cell membrane. In terms of biological role, odorant receptor. In Homo sapiens (Human), this protein is Olfactory receptor 4C16 (OR4C16).